Consider the following 117-residue polypeptide: Large ribosomal subunit protein bL19 (117 aa).

The protein belongs to the bacterial ribosomal protein bL19 family.

This protein is located at the 30S-50S ribosomal subunit interface and may play a role in the structure and function of the aminoacyl-tRNA binding site. The sequence is that of Large ribosomal subunit protein bL19 from Kineococcus radiotolerans (strain ATCC BAA-149 / DSM 14245 / SRS30216).